The primary structure comprises 324 residues: Homoserine kinase (324 aa).

87-97 (PVARGMGSSAA) contacts ATP.

This sequence belongs to the GHMP kinase family. Homoserine kinase subfamily.

The protein localises to the cytoplasm. The enzyme catalyses L-homoserine + ATP = O-phospho-L-homoserine + ADP + H(+). Its pathway is amino-acid biosynthesis; L-threonine biosynthesis; L-threonine from L-aspartate: step 4/5. Functionally, catalyzes the ATP-dependent phosphorylation of L-homoserine to L-homoserine phosphate. This is Homoserine kinase from Symbiobacterium thermophilum (strain DSM 24528 / JCM 14929 / IAM 14863 / T).